The primary structure comprises 204 residues: NADH-quinone oxidoreductase subunit C (204 aa).

The protein belongs to the complex I 30 kDa subunit family. NDH-1 is composed of 14 different subunits. Subunits NuoB, C, D, E, F, and G constitute the peripheral sector of the complex.

The protein resides in the cell inner membrane. It catalyses the reaction a quinone + NADH + 5 H(+)(in) = a quinol + NAD(+) + 4 H(+)(out). In terms of biological role, NDH-1 shuttles electrons from NADH, via FMN and iron-sulfur (Fe-S) centers, to quinones in the respiratory chain. The immediate electron acceptor for the enzyme in this species is believed to be ubiquinone. Couples the redox reaction to proton translocation (for every two electrons transferred, four hydrogen ions are translocated across the cytoplasmic membrane), and thus conserves the redox energy in a proton gradient. The polypeptide is NADH-quinone oxidoreductase subunit C (Vesicomyosocius okutanii subsp. Calyptogena okutanii (strain HA)).